A 220-amino-acid chain; its full sequence is dTTP/UTP pyrophosphatase (220 aa).

Aspartate 83 acts as the Proton acceptor in catalysis.

The protein belongs to the Maf family. YhdE subfamily. A divalent metal cation is required as a cofactor.

Its subcellular location is the cytoplasm. The enzyme catalyses dTTP + H2O = dTMP + diphosphate + H(+). It catalyses the reaction UTP + H2O = UMP + diphosphate + H(+). In terms of biological role, nucleoside triphosphate pyrophosphatase that hydrolyzes dTTP and UTP. May have a dual role in cell division arrest and in preventing the incorporation of modified nucleotides into cellular nucleic acids. The protein is dTTP/UTP pyrophosphatase of Syntrophotalea carbinolica (strain DSM 2380 / NBRC 103641 / GraBd1) (Pelobacter carbinolicus).